Reading from the N-terminus, the 201-residue chain is Small ribosomal subunit protein uS4 (201 aa).

The 63-residue stretch at 93 to 155 folds into the S4 RNA-binding domain; the sequence is CRLDNIVYRM…SKSLSMFEVN (63 aa).

It belongs to the universal ribosomal protein uS4 family. Part of the 30S ribosomal subunit. Contacts protein S5. The interaction surface between S4 and S5 is involved in control of translational fidelity.

One of the primary rRNA binding proteins, it binds directly to 16S rRNA where it nucleates assembly of the body of the 30S subunit. Its function is as follows. With S5 and S12 plays an important role in translational accuracy. The polypeptide is Small ribosomal subunit protein uS4 (Elusimicrobium minutum (strain Pei191)).